The chain runs to 443 residues: Thymidine phosphorylase (443 aa).

This sequence belongs to the thymidine/pyrimidine-nucleoside phosphorylase family. As to quaternary structure, homodimer.

It catalyses the reaction thymidine + phosphate = 2-deoxy-alpha-D-ribose 1-phosphate + thymine. It functions in the pathway pyrimidine metabolism; dTMP biosynthesis via salvage pathway; dTMP from thymine: step 1/2. Functionally, the enzymes which catalyze the reversible phosphorolysis of pyrimidine nucleosides are involved in the degradation of these compounds and in their utilization as carbon and energy sources, or in the rescue of pyrimidine bases for nucleotide synthesis. This is Thymidine phosphorylase from Shewanella piezotolerans (strain WP3 / JCM 13877).